The following is a 528-amino-acid chain: Importin subunit alpha-7 (528 aa).

The 56-residue stretch at 1-56 (MKGGETMSVRRSGYKAVVDGVGGRRRREDDMVEIRKAKREESLLKKRREALPHSPS) folds into the IBB domain. 8 ARM repeats span residues 93-133 (NVRV…NIAS), 136-175 (SENTEVVIDHGAVAILVRLLNSPYDVVREQVVWALGNISG), 178-218 (PRCR…NLCR), 220-259 (KPQPPFDQVSAALPALAQLIRLDDKELLAYTCWALVYLSD), 262-301 (NEKIQAVIEANVCARLIGLSIHRSPSVITPALRTIGNIVT), 304-344 (DSQT…NITA), 347-386 (QSQIQAVFDADICPALVNLLQNSEGDVKKEAAWAICNAIA), and 390-429 (YKQIMFLVKQECIKPLCDLLTCSDTQLVMVCLEALKKILK).

The protein belongs to the importin alpha family. In terms of assembly, forms a complex with importin subunit beta-1.

It is found in the nucleus envelope. Its function is as follows. Binds to conventional NLS motifs and mediates nuclear protein import across the nuclear envelope. Acts as a cellular receptor for the nuclear import of the virD2 protein of Agrobacterium, but is not essential for Agrobacterium-mediated root transformation. The polypeptide is Importin subunit alpha-7 (Arabidopsis thaliana (Mouse-ear cress)).